The primary structure comprises 480 residues: Iroquois-class homeodomain protein IRX-1 (480 aa).

The homeobox; TALE-type DNA-binding region spans 127–189; sequence DPGRPKNATR…NARRRLKKEN (63 aa). Disordered stretches follow at residues 190–285, 318–354, and 401–480; these read KVTW…LGLV, SLAETATSPDGAPKASPPPPSSHASAHGPPSGSPLQH, and PHGP…LPSA. Acidic residues predominate over residues 210 to 232; that stretch reads TEGDPEKAEDDEEIDLESIDIDQ. Ser241 is subject to Phosphoserine. A compositionally biased stretch (low complexity) spans 254–263; it reads ARVAPPASAR. Positions 264-280 are enriched in polar residues; the sequence is DQSSPLSAAETLKSQDS. The segment covering 339 to 351 has biased composition (low complexity); sequence SHASAHGPPSGSP.

The protein belongs to the TALE/IRO homeobox family. In terms of tissue distribution, expressed in specific and overlapping patterns with Irx1 and Irx2 in the developing and adult metanephric kidney. In the adult metanephros, renal expression is found in the loop of Henle in the S3 proximal tubule segment and in the thick ascending limb (TAL) of the distal tubule.

The protein localises to the nucleus. This is Iroquois-class homeodomain protein IRX-1 (Irx1) from Mus musculus (Mouse).